A 255-amino-acid polypeptide reads, in one-letter code: Thiazole synthase (255 aa).

Lysine 95 functions as the Schiff-base intermediate with DXP in the catalytic mechanism. 1-deoxy-D-xylulose 5-phosphate is bound by residues glycine 156, 182-183, and 204-205; these read AG and NT.

Belongs to the ThiG family. As to quaternary structure, homotetramer. Forms heterodimers with either ThiH or ThiS.

The protein localises to the cytoplasm. It carries out the reaction [ThiS sulfur-carrier protein]-C-terminal-Gly-aminoethanethioate + 2-iminoacetate + 1-deoxy-D-xylulose 5-phosphate = [ThiS sulfur-carrier protein]-C-terminal Gly-Gly + 2-[(2R,5Z)-2-carboxy-4-methylthiazol-5(2H)-ylidene]ethyl phosphate + 2 H2O + H(+). It functions in the pathway cofactor biosynthesis; thiamine diphosphate biosynthesis. In terms of biological role, catalyzes the rearrangement of 1-deoxy-D-xylulose 5-phosphate (DXP) to produce the thiazole phosphate moiety of thiamine. Sulfur is provided by the thiocarboxylate moiety of the carrier protein ThiS. In vitro, sulfur can be provided by H(2)S. This is Thiazole synthase from Vibrio campbellii (strain ATCC BAA-1116).